The primary structure comprises 553 residues: MSEIALTVSVLALVAVVGLWIGNVKIRGVGFGIGGVLFGGIIVGHFVDQAGVALSSPMLHFIQEFGLILFVYTIGIQVGPGFFASLRVSGLRLNLFAILIVILGGLVTAVLHKLFNIPLPVVLGIFSGAVTNTPALGAGQQILRDLGVPFEVVDQMGMSYAMAYPFGICGILLTMWLVRLFFRINVEKEAQRFEESSGNGHAHLHTINVRVENPNLNQMAIQDVPMLNNDNIVCSRLKRGELLMVPAPGTLIQAGDLLHLVGRPEDLHNAQLVIGQEVATSLSTRGTDLKVERVVVTNEKVLGKKIRDLHVKQRYDVVISRLNRAGVELVASSSASLQFGDILNLVGRPEAIDAVAAELGNAQQKLQQVQMLPVFIGIGLGVLLGSIPLFIPGFPAALKLGLAGGPLIMALILGRIGSIGKLYWFMPPSANLALRELGIVLFLAVVGLKSGGDFVATLTQGDGLSWIAYGIFITAIPLLTVGVLARMLAKMNYLTLCGMLAGSMTDPPALAFANNLHATSGAAALSYATVYPLVMFLRIITPQLLAVLFWGLS.

5 consecutive transmembrane segments (helical) span residues 4–24 (IALT…IGNV), 28–48 (GVGF…HFVD), 65–85 (FGLI…FFAS), 95–115 (LFAI…HKLF), and 158–178 (MSYA…MWLV). RCK C-terminal domains are found at residues 192-276 (RFEE…VIGQ) and 279-361 (ATSL…ELGN). Transmembrane regions (helical) follow at residues 371–391 (MLPV…PLFI), 403–425 (AGGP…LYWF), 437–457 (LGIV…FVAT), 464–484 (LSWI…VGVL), 493–513 (YLTL…LAFA), and 532–552 (PLVM…FWGL).

The protein belongs to the AAE transporter (TC 2.A.81) family. YidE subfamily.

The protein resides in the cell membrane. The protein is Putative transport protein KPN78578_40470 of Klebsiella pneumoniae subsp. pneumoniae (strain ATCC 700721 / MGH 78578).